Consider the following 546-residue polypeptide: Tyrosine-protein kinase yes (546 aa).

Residues methionine 1–proline 18 are compositionally biased toward basic and acidic residues. A disordered region spans residues methionine 1–glycine 58. A lipid anchor (N-myristoyl glycine) is attached at glycine 2. Cysteine 3 is lipidated: S-palmitoyl cysteine; in membrane form. Over residues proline 48–glycine 58 the composition is skewed to polar residues. One can recognise an SH3 domain in the interval glycine 94 to serine 155. One can recognise an SH2 domain in the interval tryptophan 161–cysteine 258. Residues leucine 280–phenylalanine 533 form the Protein kinase domain. ATP contacts are provided by residues leucine 286 to valine 294 and lysine 308. The active-site Proton acceptor is the aspartate 399. Tyrosine 429 bears the Phosphotyrosine; by autocatalysis mark. Tyrosine 540 carries the phosphotyrosine; by CSK modification.

It belongs to the protein kinase superfamily. Tyr protein kinase family. SRC subfamily. In terms of processing, autophosphorylation at Tyr-429 maintains enzyme activity. Palmitoylation at Cys-3 promotes membrane localization. In terms of tissue distribution, widely expressed.

The protein resides in the cell membrane. The protein localises to the cytoplasm. It localises to the cytoskeleton. It is found in the microtubule organizing center. Its subcellular location is the centrosome. The protein resides in the cytosol. The protein localises to the cell junction. It carries out the reaction L-tyrosyl-[protein] + ATP = O-phospho-L-tyrosyl-[protein] + ADP + H(+). Its function is as follows. Non-receptor protein tyrosine kinase that is involved in the regulation of cell growth and survival, apoptosis, cell-cell adhesion, cytoskeleton remodeling, differentiation, G2/M progression and cytokinesis. Required for convergent extension cell movements during gastrulation, acting with fyna via rhoa. May be required for epiboly to occur, possibly through its effects in calcium signaling. During embryonic development, phosphorylates ptk2.1/fak. This chain is Tyrosine-protein kinase yes (yes1), found in Danio rerio (Zebrafish).